The following is a 219-amino-acid chain: Orotate phosphoribosyltransferase (219 aa).

Lys-26 provides a ligand contact to 5-phospho-alpha-D-ribose 1-diphosphate. Position 34-35 (34-35 (FF)) interacts with orotate. 5-phospho-alpha-D-ribose 1-diphosphate is bound by residues 72-73 (YK), Arg-98, Lys-99, Lys-102, His-104, and 124-132 (DDVITAGTA). Residues Thr-128 and Arg-156 each coordinate orotate.

This sequence belongs to the purine/pyrimidine phosphoribosyltransferase family. PyrE subfamily. In terms of assembly, homodimer. Mg(2+) serves as cofactor.

It catalyses the reaction orotidine 5'-phosphate + diphosphate = orotate + 5-phospho-alpha-D-ribose 1-diphosphate. It functions in the pathway pyrimidine metabolism; UMP biosynthesis via de novo pathway; UMP from orotate: step 1/2. Its function is as follows. Catalyzes the transfer of a ribosyl phosphate group from 5-phosphoribose 1-diphosphate to orotate, leading to the formation of orotidine monophosphate (OMP). The sequence is that of Orotate phosphoribosyltransferase from Stenotrophomonas maltophilia (strain R551-3).